The primary structure comprises 299 residues: Ribonuclease Z (299 aa).

Residues histidine 60, histidine 62, aspartate 64, histidine 65, histidine 137, aspartate 207, and histidine 265 each coordinate Zn(2+). The active-site Proton acceptor is aspartate 64.

Belongs to the RNase Z family. As to quaternary structure, homodimer. Requires Zn(2+) as cofactor.

The enzyme catalyses Endonucleolytic cleavage of RNA, removing extra 3' nucleotides from tRNA precursor, generating 3' termini of tRNAs. A 3'-hydroxy group is left at the tRNA terminus and a 5'-phosphoryl group is left at the trailer molecule.. Functionally, zinc phosphodiesterase, which displays some tRNA 3'-processing endonuclease activity. Probably involved in tRNA maturation, by removing a 3'-trailer from precursor tRNA. The chain is Ribonuclease Z from Nitrosopumilus maritimus (strain SCM1).